Here is a 247-residue protein sequence, read N- to C-terminus: Ribonuclease PH (247 aa).

Phosphate is bound by residues R96 and 134-136 (GTR).

This sequence belongs to the RNase PH family. Homohexameric ring arranged as a trimer of dimers.

The catalysed reaction is tRNA(n+1) + phosphate = tRNA(n) + a ribonucleoside 5'-diphosphate. Phosphorolytic 3'-5' exoribonuclease that plays an important role in tRNA 3'-end maturation. Removes nucleotide residues following the 3'-CCA terminus of tRNAs; can also add nucleotides to the ends of RNA molecules by using nucleoside diphosphates as substrates, but this may not be physiologically important. Probably plays a role in initiation of 16S rRNA degradation (leading to ribosome degradation) during starvation. This is Ribonuclease PH from Tropheryma whipplei (strain TW08/27) (Whipple's bacillus).